A 293-amino-acid polypeptide reads, in one-letter code: 4-hydroxy-tetrahydrodipicolinate synthase 1 (293 aa).

Residue Thr-46 participates in pyruvate binding. Tyr-134 acts as the Proton donor/acceptor in catalysis. The active-site Schiff-base intermediate with substrate is the Lys-162. Pyruvate is bound at residue Ile-204.

Belongs to the DapA family. As to quaternary structure, homotetramer; dimer of dimers.

The protein localises to the cytoplasm. The catalysed reaction is L-aspartate 4-semialdehyde + pyruvate = (2S,4S)-4-hydroxy-2,3,4,5-tetrahydrodipicolinate + H2O + H(+). It participates in amino-acid biosynthesis; L-lysine biosynthesis via DAP pathway; (S)-tetrahydrodipicolinate from L-aspartate: step 3/4. Its function is as follows. Catalyzes the condensation of (S)-aspartate-beta-semialdehyde [(S)-ASA] and pyruvate to 4-hydroxy-tetrahydrodipicolinate (HTPA). This chain is 4-hydroxy-tetrahydrodipicolinate synthase 1, found in Clostridium acetobutylicum (strain ATCC 824 / DSM 792 / JCM 1419 / IAM 19013 / LMG 5710 / NBRC 13948 / NRRL B-527 / VKM B-1787 / 2291 / W).